Here is a 67-residue protein sequence, read N- to C-terminus: Beta-defensin 123 (67 aa).

The N-terminal stretch at 1–20 (MKLLLLTLTVLLLLSQLTPG) is a signal peptide. Intrachain disulfides connect Cys-25-Cys-52, Cys-32-Cys-46, and Cys-36-Cys-53.

This sequence belongs to the beta-defensin family.

It is found in the secreted. Has antibacterial activity. This chain is Beta-defensin 123 (DEFB123), found in Pongo pygmaeus (Bornean orangutan).